We begin with the raw amino-acid sequence, 825 residues long: MWSGDRRVGMESLSPERLHGHPYQEEASVFCRLTVKILEARSLPRADLLSQADPYVTVQLPTASGMKFKTQTVTNSSHPVWNETFSFLIQSQVKNILELTIYDEDVITKDDICFKVSYDVSEILPGQLLQKTFSLNPQGPEELDVELLMERTWDPPENLITNNVLVARELSHLDVSLDRAGNTAMAAGQDKLELELMLKGSYEDTQTFFPDTAFTFSFHYMRGQDTELNGYLRGPRNSGWNSDTSVTPFNVPLMSLAAGKEMTIDIPAMKAPEGKLQLKTDCCPKELSVRLSYGLCPEEQAFLSRRKKVVAAALKQALQLDEDLNEDEVPVVGINAEGGGMRAMISLYGHLLALQKLGLLDCVTYFSGISGSTWTMAHLYRDPEWSQRDLEGPISHAREHVAKTLLKEFLPEHLASYRQTLKLREEQGYTVTVADLWGLVLESKLHGQVTDQKLSGQRAALERGQNPLPLYLSLNVKENHLETLHFKEWVEFSPYEVGFLKYGGFVPSELFGSEFFMGRLMKRLPESQICFLEGIWSNLFSVNLMDIWYDITYGKDSNNFPVDVRNSEKEFSGSAGTSSGVEAPWLESGTALAQALKGFLTGRPFHQRSANFLHGLQLHRDYCNQRHFSTWADCNLDDTPNQLTPQDPQLCLIDAGCFMNSSCPSLFRPGRQVDLIISFNYNQSLPFKGLQQSEKYSRARGLPFPRVEPSPEDHSQPQECYLFSDPTCPEAPVVLHFPLVNDSFRDHSAPGVRRSPDELKAGQVNLTGAASPYFMYNMTYKNEDFDRLLQLSDYNVQNNQGTILQALRTVLKRRASETRPLGVKT.

One can recognise a C2 domain in the interval 14 to 133 (SPERLHGHPY…LPGQLLQKTF (120 aa)). The Ca(2+) site is built by aspartate 47, aspartate 53, aspartate 103, aspartate 105, and aspartate 111. The PLA2c domain occupies 281–825 (DCCPKELSVR…SETRPLGVKT (545 aa)). 339–340 (GG) lines the substrate pocket. The Nucleophile role is filled by serine 370. Aspartate 654 serves as the catalytic Proton acceptor.

It depends on Ca(2+) as a cofactor. In terms of tissue distribution, weakly or not expressed in most tissues. Detected in placenta of 17.5 dpc embryos.

Its subcellular location is the cytoplasm. It localises to the cytosol. The protein resides in the membrane. It catalyses the reaction a 1,2-diacyl-sn-glycero-3-phosphocholine + H2O = a 1-acyl-sn-glycero-3-phosphocholine + a fatty acid + H(+). The catalysed reaction is 1-hexadecanoyl-2-(5Z,8Z,11Z,14Z-eicosatetraenoyl)-sn-glycero-3-phosphocholine + H2O = 1-hexadecanoyl-sn-glycero-3-phosphocholine + (5Z,8Z,11Z,14Z)-eicosatetraenoate + H(+). It carries out the reaction 1-hexadecanoyl-2-(9Z,12Z-octadecadienoyl)-sn-glycero-3-phosphocholine + H2O = (9Z,12Z)-octadecadienoate + 1-hexadecanoyl-sn-glycero-3-phosphocholine + H(+). The enzyme catalyses 1-hexadecanoyl-2-(9Z-octadecenoyl)-sn-glycero-3-phosphocholine + H2O = 1-hexadecanoyl-sn-glycero-3-phosphocholine + (9Z)-octadecenoate + H(+). It catalyses the reaction 1-hexadecanoyl-2-(5Z,8Z,11Z,14Z-eicosatetraenoyl)-sn-glycero-3-phosphoethanolamine + H2O = 1-hexadecanoyl-sn-glycero-3-phosphoethanolamine + (5Z,8Z,11Z,14Z)-eicosatetraenoate + H(+). The catalysed reaction is 1-hexadecanoyl-2-(9Z,12Z-octadecadienoyl)-sn-glycero-3-phosphoethanolamine + H2O = 1-hexadecanoyl-sn-glycero-3-phosphoethanolamine + (9Z,12Z)-octadecadienoate + H(+). It carries out the reaction 1-hexadecanoyl-sn-glycero-3-phosphocholine + H2O = sn-glycerol 3-phosphocholine + hexadecanoate + H(+). The protein operates within lipid metabolism; fatty acid metabolism. Its activity is regulated as follows. Stimulated by cytosolic Ca(2+). Calcium-dependent phospholipase A2 that selectively hydrolyzes glycerophospholipids in the sn-2 position. Compared to its human ortholog, may have no preference for the fatty acid found at the sn-2 position. The sequence is that of Cytosolic phospholipase A2 delta from Mus musculus (Mouse).